A 375-amino-acid chain; its full sequence is All-trans-retinol dehydrogenase [NAD(+)] ADH1B (375 aa).

Position 2 is an N-acetylserine (S2). S23 is modified (phosphoserine). At Y35 the chain carries Phosphotyrosine. The Zn(2+) site is built by C47, H68, C98, C101, C104, C112, and C175. Residues 200-205, D224, K229, 293-295, and R370 contribute to the NAD(+) site; these read GLGGVG and VGV.

The protein belongs to the zinc-containing alcohol dehydrogenase family. In terms of assembly, dimer of identical or non-identical chains of three types; alpha, beta and gamma. Zn(2+) serves as cofactor.

Its subcellular location is the cytoplasm. It catalyses the reaction all-trans-retinol + NAD(+) = all-trans-retinal + NADH + H(+). The catalysed reaction is all-trans-4-hydroxyretinol + NAD(+) = all-trans-4-hydroxyretinal + NADH + H(+). It carries out the reaction all-trans-4-oxoretinol + NAD(+) = all-trans-4-oxoretinal + NADH + H(+). Its function is as follows. Catalyzes the NAD-dependent oxidation of all-trans-retinol and its derivatives such as all-trans-4-hydroxyretinol and may participate in retinoid metabolism. In vitro can also catalyze the NADH-dependent reduction of all-trans-retinal and its derivatives such as all-trans-4-oxoretinal. Catalyzes in the oxidative direction with higher efficiency. Has the same affinity for all-trans-4-hydroxyretinol and all-trans-4-oxoretinal. In Homo sapiens (Human), this protein is All-trans-retinol dehydrogenase [NAD(+)] ADH1B.